A 429-amino-acid chain; its full sequence is Proton/sodium-glutamate symport protein (429 aa).

The Cytoplasmic segment spans residues Met1–Lys5. Residues Phe6–Trp26 form a helical membrane-spanning segment. Residues Tyr27–Arg45 are Extracellular-facing. A helical transmembrane segment spans residues Leu46–Ala66. Topologically, residues Gly67 to Thr79 are cytoplasmic. A helical membrane pass occupies residues Ile80–Ile100. The Extracellular segment spans residues Phe101–Glu150. A helical membrane pass occupies residues Gly151–Gly171. The Cytoplasmic portion of the chain corresponds to Glu172–His190. A helical transmembrane segment spans residues Val191–Val211. The Extracellular portion of the chain corresponds to Ser212–Lys224. Residues Leu225–Ala245 form a helical membrane-spanning segment. A topological domain (cytoplasmic) is located at residue Lys246. Residues Ile247–Phe267 form a helical membrane-spanning segment. Residues Ser268 to Lys290 lie on the Extracellular side of the membrane. The chain crosses the membrane as a helical span at residues Gly291–Tyr311. At Gln312–Gln321 the chain is on the cytoplasmic side. A helical membrane pass occupies residues Val322–Thr342. Residues Ser343–Ser353 are Extracellular-facing. A helical transmembrane segment spans residues Phe354–Ile374. The Cytoplasmic segment spans residues Ala375 to Gly429.

The protein belongs to the dicarboxylate/amino acid:cation symporter (DAACS) (TC 2.A.23) family. In terms of assembly, homotrimer. Interacts with FloT.

The protein resides in the cell membrane. It localises to the membrane raft. Its function is as follows. This carrier protein is part of the Na(+)-dependent, binding-protein-independent glutamate-aspartate transport system. The chain is Proton/sodium-glutamate symport protein (gltT) from Bacillus subtilis (strain 168).